We begin with the raw amino-acid sequence, 87 residues long: MYVIELTLRMSPIPVSVQRKEPSDAEALYQEIRQAIDHGQPRLLDLTCEKVEGKKAALLISEVLAVQLYEKASAAGGSKRPGFSLES.

It belongs to the UPF0367 family.

The chain is UPF0367 protein Syncc9902_0316 from Synechococcus sp. (strain CC9902).